The primary structure comprises 725 residues: N-alpha-acetyltransferase 35, NatC auxiliary subunit (725 aa).

At serine 187 the chain carries Phosphoserine. Residues 548 to 573 (ERIMEEQQKGRSSKKTKKKKKVRPLS) form a disordered region. The segment covering 558–571 (RSSKKTKKKKKVRP) has biased composition (basic residues).

The protein belongs to the MAK10 family. Component of the N-terminal acetyltransferase C (NatC) complex, which is composed of NAA35, NAA38 and NAA30.

Its subcellular location is the cytoplasm. Its function is as follows. Auxillary component of the N-terminal acetyltransferase C (NatC) complex which catalyzes acetylation of N-terminal methionine residues. N-terminal acetylation protects proteins from ubiquitination and degradation by the N-end rule pathway. Involved in regulation of apoptosis and proliferation of smooth muscle cells. The chain is N-alpha-acetyltransferase 35, NatC auxiliary subunit (NAA35) from Homo sapiens (Human).